Here is a 181-residue protein sequence, read N- to C-terminus: NAD(P)H-quinone oxidoreductase subunit I, chloroplastic (181 aa).

4Fe-4S ferredoxin-type domains lie at 52 to 81 and 92 to 121; these read GRIH…VDWE and KSYS…MTEE. Positions 61, 64, 67, 71, 101, 104, 107, and 111 each coordinate [4Fe-4S] cluster.

The protein belongs to the complex I 23 kDa subunit family. In terms of assembly, NDH is composed of at least 16 different subunits, 5 of which are encoded in the nucleus. Requires [4Fe-4S] cluster as cofactor.

The protein resides in the plastid. The protein localises to the chloroplast thylakoid membrane. It carries out the reaction a plastoquinone + NADH + (n+1) H(+)(in) = a plastoquinol + NAD(+) + n H(+)(out). It catalyses the reaction a plastoquinone + NADPH + (n+1) H(+)(in) = a plastoquinol + NADP(+) + n H(+)(out). NDH shuttles electrons from NAD(P)H:plastoquinone, via FMN and iron-sulfur (Fe-S) centers, to quinones in the photosynthetic chain and possibly in a chloroplast respiratory chain. The immediate electron acceptor for the enzyme in this species is believed to be plastoquinone. Couples the redox reaction to proton translocation, and thus conserves the redox energy in a proton gradient. This Staurastrum punctulatum (Green alga) protein is NAD(P)H-quinone oxidoreductase subunit I, chloroplastic.